A 432-amino-acid polypeptide reads, in one-letter code: Histidinol dehydrogenase (432 aa).

Residues S240, Q262, and H265 each contribute to the substrate site. Positions 262 and 265 each coordinate Zn(2+). Catalysis depends on proton acceptor residues E330 and H331. Residues H331, D364, E418, and H423 each contribute to the substrate site. Position 364 (D364) interacts with Zn(2+). A Zn(2+)-binding site is contributed by H423.

The protein belongs to the histidinol dehydrogenase family. Zn(2+) serves as cofactor.

It catalyses the reaction L-histidinol + 2 NAD(+) + H2O = L-histidine + 2 NADH + 3 H(+). The protein operates within amino-acid biosynthesis; L-histidine biosynthesis; L-histidine from 5-phospho-alpha-D-ribose 1-diphosphate: step 9/9. Functionally, catalyzes the sequential NAD-dependent oxidations of L-histidinol to L-histidinaldehyde and then to L-histidine. This is Histidinol dehydrogenase from Wolinella succinogenes (strain ATCC 29543 / DSM 1740 / CCUG 13145 / JCM 31913 / LMG 7466 / NCTC 11488 / FDC 602W) (Vibrio succinogenes).